We begin with the raw amino-acid sequence, 440 residues long: UDP-N-acetylmuramoylalanine--D-glutamate ligase (440 aa).

115–121 (GSNGKST) is a binding site for ATP.

This sequence belongs to the MurCDEF family.

It is found in the cytoplasm. It catalyses the reaction UDP-N-acetyl-alpha-D-muramoyl-L-alanine + D-glutamate + ATP = UDP-N-acetyl-alpha-D-muramoyl-L-alanyl-D-glutamate + ADP + phosphate + H(+). The protein operates within cell wall biogenesis; peptidoglycan biosynthesis. Its function is as follows. Cell wall formation. Catalyzes the addition of glutamate to the nucleotide precursor UDP-N-acetylmuramoyl-L-alanine (UMA). The polypeptide is UDP-N-acetylmuramoylalanine--D-glutamate ligase (Aliivibrio fischeri (strain ATCC 700601 / ES114) (Vibrio fischeri)).